A 371-amino-acid chain; its full sequence is Vasopressin V2 receptor (371 aa).

The disordered stretch occupies residues 1–30 (MLMASTTSAVPGHPSLPSLPSNSSQERPLD). At 1–38 (MLMASTTSAVPGHPSLPSLPSNSSQERPLDTRDPLLAR) the chain is on the extracellular side. Over residues 15–24 (SLPSLPSNSS) the composition is skewed to low complexity. N-linked (GlcNAc...) asparagine glycosylation is present at Asn-22. Residues 39-63 (AELALLSIVFVAVALSNGLVLAALA) form a helical membrane-spanning segment. The Cytoplasmic segment spans residues 64 to 77 (RRGRRGHWAPIHVF). A helical transmembrane segment spans residues 78–98 (IGHLCLADLAVALFQVLPQLA). Residues 99–113 (WKATDRFRGPDALCR) are Extracellular-facing. A helical transmembrane segment spans residues 114–135 (AVKYLQMVGMYASSYMILAMTL). The Cytoplasmic segment spans residues 136 to 159 (DRHRAICRPMLAYRHGSGAHWNRP). Residues 160–180 (VLVAWAFSLLLSLPQLFIFAQ) traverse the membrane as a helical segment. The Extracellular portion of the chain corresponds to 181 to 200 (RNVEGGSGVTDCWACFAEPW). The helical transmembrane segment at 201–220 (GRRTYVTWIALMVFVAPTLG) threads the bilayer. Residues 221–271 (IAACQVLIFREIHASLVPGPSERPGGRRRGRRTGSPGEGAHVSAAVAKTVR) lie on the Cytoplasmic side of the membrane. A disordered region spans residues 240 to 259 (PSERPGGRRRGRRTGSPGEG). A helical transmembrane segment spans residues 272-293 (MTLVIVVVYVLCWAPFFLVQLW). Topologically, residues 294 to 308 (AAWDPEAPLEGAPFV) are extracellular. Residues 309–328 (LLMLLASLNSCTNPWIYASF) traverse the membrane as a helical segment. The Cytoplasmic segment spans residues 329-371 (SSSVSSELRSLLCCARGRTPPSLGPQDESCTTASSSLAKDTSS). Residues Cys-341 and Cys-342 are each lipidated (S-palmitoyl cysteine). The disordered stretch occupies residues 349–371 (PSLGPQDESCTTASSSLAKDTSS). A compositionally biased stretch (polar residues) spans 356 to 371 (ESCTTASSSLAKDTSS).

This sequence belongs to the G-protein coupled receptor 1 family. Vasopressin/oxytocin receptor subfamily. As to quaternary structure, interacts with ARRDC4. Identified in a complex containing at least ARRDC4, V2R and HGS. Interacts with TMEM147. As to expression, kidney.

It is found in the cell membrane. In terms of biological role, receptor for arginine vasopressin. The activity of this receptor is mediated by G proteins which activate adenylate cyclase. Involved in renal water reabsorption. The sequence is that of Vasopressin V2 receptor (AVPR2) from Homo sapiens (Human).